Consider the following 683-residue polypeptide: Zinc finger protein 418 (683 aa).

One can recognise a KRAB domain in the interval 48–123 (VTIEDVTVYF…TPKQGQLRQK (76 aa)). The span at 102-120 (QSLSQTEAPQVRTPKQGQL) shows a compositional bias: polar residues. Disordered stretches follow at residues 102–124 (QSLSQTEAPQVRTPKQGQLRQKP) and 209–247 (DIPNGEKQNKIKRGKAFHRDKNNSESDEYKKSSSPQHRL). Over residues 225-239 (FHRDKNNSESDEYKK) the composition is skewed to basic and acidic residues. C2H2-type zinc fingers lie at residues 287-309 (YECHVCGKWFGQKATLRIHQRRH), 315-337 (YKCGECGKSFCQSSNLSEHCRVH), 343-365 (FECLECGKAFGCHSSLLRHQRTH), 371-393 (YECSDCGRLFRQIVSLITHQRTH), 399-421 (YECGQCEKSFSHKATLTVHQRVH), 427-449 (YHCEACGKSFSQSANLIKHSKIH), 455-477 (YECGECGLCFRQRATLMKHQRTH), 483-505 (YECRECGKFFKQYFYLIEHRRIH), 511-533 (YECEQCGKSYTQKATLIRHQRVH), 539-561 (YKCEECGKAFEYKSRLKRHQRTH), 567-589 (YECAKCGKFFRESYNLAEHQKIH), 595-617 (YHCDQCGKCFSRRADLVKHQRVH), 623-645 (YTCGECGKTFSRTTNLVQHRRIH), and 651-673 (YECDQCGKSFSQVSTLTRHQLLH).

The protein belongs to the krueppel C2H2-type zinc-finger protein family.

Its subcellular location is the nucleus. Its function is as follows. Transcriptional repressor. May play a role as regulator of the ubiquitin-proteasome system and autophagy-lysosomal pathway. In Rattus norvegicus (Rat), this protein is Zinc finger protein 418.